A 128-amino-acid chain; its full sequence is MHLPPQAAGPYRSRFSYNTQTQPPEKPRSSAELKPQSPSLITEKRPRPGPKGRNRVAFNYECCNYFIIAVSLLAGSSQYTLVSGPDGPLTRRYAPTSGKPSSGPLRPRTEALSWLKAGMVWQGWGWVR.

2 disordered regions span residues 1–53 (MHLP…PKGR) and 85–105 (PDGP…SGPL).

This is an uncharacterized protein from Escherichia coli.